The primary structure comprises 287 residues: Phosphatidylinositol transfer protein 5 (287 aa).

The segment at 252–287 is disordered; it reads FHNNNNNNSNNSNNNNNNNTQPQRSSFFSRSTDGNK. Residues 254 to 270 show a composition bias toward low complexity; that stretch reads NNNNNNSNNSNNNNNNN. The segment covering 271 to 287 has biased composition (polar residues); that stretch reads TQPQRSSFFSRSTDGNK.

Belongs to the PtdIns transfer protein family. PI transfer class IIA subfamily.

Functionally, phosphatidylinositol transfer proteins mediate the monomeric transport of lipids by shielding a lipid from the aqueous environment and binding the lipid in a hydrophobic cavity. This chain is Phosphatidylinositol transfer protein 5 (pitE), found in Dictyostelium discoideum (Social amoeba).